A 454-amino-acid chain; its full sequence is Bifunctional protein GlmU (454 aa).

Residues 1 to 228 (MNKCAIILAA…FEETLGVNSR (228 aa)) are pyrophosphorylase. UDP-N-acetyl-alpha-D-glucosamine-binding positions include 8–11 (LAAG), lysine 22, glutamine 73, and 78–79 (GT). A Mg(2+)-binding site is contributed by aspartate 103. 4 residues coordinate UDP-N-acetyl-alpha-D-glucosamine: glycine 140, glutamate 154, asparagine 169, and asparagine 226. Residue asparagine 226 coordinates Mg(2+). The segment at 229-249 (AELAKVESIMRNRINRTHLDN) is linker. Residues 250–454 (GVTIIDPLNT…EGWVERKKLK (205 aa)) form an N-acetyltransferase region. The UDP-N-acetyl-alpha-D-glucosamine site is built by arginine 331 and lysine 349. Histidine 361 serves as the catalytic Proton acceptor. Positions 364 and 375 each coordinate UDP-N-acetyl-alpha-D-glucosamine. Residues 384-385 (NY), alanine 421, and arginine 438 each bind acetyl-CoA.

It in the N-terminal section; belongs to the N-acetylglucosamine-1-phosphate uridyltransferase family. The protein in the C-terminal section; belongs to the transferase hexapeptide repeat family. Homotrimer. Mg(2+) serves as cofactor.

It is found in the cytoplasm. The enzyme catalyses alpha-D-glucosamine 1-phosphate + acetyl-CoA = N-acetyl-alpha-D-glucosamine 1-phosphate + CoA + H(+). The catalysed reaction is N-acetyl-alpha-D-glucosamine 1-phosphate + UTP + H(+) = UDP-N-acetyl-alpha-D-glucosamine + diphosphate. Its pathway is nucleotide-sugar biosynthesis; UDP-N-acetyl-alpha-D-glucosamine biosynthesis; N-acetyl-alpha-D-glucosamine 1-phosphate from alpha-D-glucosamine 6-phosphate (route II): step 2/2. It functions in the pathway nucleotide-sugar biosynthesis; UDP-N-acetyl-alpha-D-glucosamine biosynthesis; UDP-N-acetyl-alpha-D-glucosamine from N-acetyl-alpha-D-glucosamine 1-phosphate: step 1/1. It participates in bacterial outer membrane biogenesis; LPS lipid A biosynthesis. Catalyzes the last two sequential reactions in the de novo biosynthetic pathway for UDP-N-acetylglucosamine (UDP-GlcNAc). The C-terminal domain catalyzes the transfer of acetyl group from acetyl coenzyme A to glucosamine-1-phosphate (GlcN-1-P) to produce N-acetylglucosamine-1-phosphate (GlcNAc-1-P), which is converted into UDP-GlcNAc by the transfer of uridine 5-monophosphate (from uridine 5-triphosphate), a reaction catalyzed by the N-terminal domain. The sequence is that of Bifunctional protein GlmU from Clostridium perfringens (strain SM101 / Type A).